The following is a 298-amino-acid chain: Rhodomycin D methylesterase DnrP (298 aa).

The region spanning 25–277 (PLLLIAGGNL…VEIENMGHAL (253 aa)) is the AB hydrolase-1 domain.

This sequence belongs to the methyl esterase DnrP family.

It catalyses the reaction rhodomycin D + H2O = 10-carboxy-13-deoxycarminomycin + methanol + H(+). It carries out the reaction 4-O-methylrhodomycin D + H2O = 10-carboxy-13-deoxydaunorubicin + methanol + H(+). It participates in antibiotic biosynthesis; daunorubicin biosynthesis. It functions in the pathway antibiotic biosynthesis; carminomycin biosynthesis. Involved in the biosynthesis of the anthracyclines carminomycin and daunorubicin (daunomycin) which are aromatic polyketide antibiotics that exhibit high cytotoxicity and are widely applied in the chemotherapy of a variety of cancers. Catalyzes the removal of methyl group from the carbomethoxy group of rhodomycin D (10-carbomethoxy-13-deoxycarminomycin) and 4-O-methylrhodomycin D to yield 10-carboxy-13-deoxycarminomycin and 10-carboxy-13-deoxydaunorubicin, respectively. Could be also involved in the decarboxylation of 10-carboxy-13-deoxycarminomycin and 10-carboxy-13-deoxydaunorubicin to yield 13-deoxycarminomycin and 13-deoxydaunorubicin, respectively. It seems that DnrK may influence the ability of DnrP to carry out the decarboxylation. In Streptomyces peucetius, this protein is Rhodomycin D methylesterase DnrP (dnrP).